We begin with the raw amino-acid sequence, 106 residues long: Apovitellenin-1 (106 aa).

The N-terminal stretch at 1 to 24 (MVQYRALVIAVILLLSTTVPEVHS) is a signal peptide.

Belongs to the apovitellenin family. Homodimer; disulfide-linked. Produced by the liver, secreted into the blood and then sequestred by receptor mediated endocytosis into growing oocytes.

Functionally, protein component of the very low density lipoprotein (VLDL) of egg-laying females. Potent lipoprotein lipase inhibitor, preventing the loss of triglycerides from VLDL on their way from the liver to the growing oocytes. The polypeptide is Apovitellenin-1 (Gallus gallus (Chicken)).